The following is a 150-amino-acid chain: S-protein homolog 3 (150 aa).

Positions 1-23 (MKNILKTQVHVVVIYLLIKIAFS) are cleaved as a signal peptide. N32 and N70 each carry an N-linked (GlcNAc...) asparagine glycan.

It belongs to the plant self-incompatibility (S1) protein family.

It is found in the secreted. This is S-protein homolog 3 from Arabidopsis thaliana (Mouse-ear cress).